A 105-amino-acid chain; its full sequence is MIASKFGIGQQVRHSLHGYLGVVIDIDPEYSLAPPEPDEVANNKTLRSSPWYHVVIEDDDGQPVHTYLAEAQLTYEDVDAHPEQPSLDELAASIRHQLQAPHLRN.

The segment at 80–105 (AHPEQPSLDELAASIRHQLQAPHLRN) is disordered.

Belongs to the HspQ family.

The protein resides in the cytoplasm. Functionally, involved in the degradation of certain denaturated proteins, including DnaA, during heat shock stress. In Yersinia pseudotuberculosis serotype O:1b (strain IP 31758), this protein is Heat shock protein HspQ.